Consider the following 644-residue polypeptide: MFQDNPLLAQLKQQLHSQTPRAEGVVKATEKGFGFLEVDAQKSYFIPPPQMKKVMHGDRIVAVIHTEKERESAEPEELIEPFLTRFVGKVQGKNDRLSIVPDHPLLKDAIPCRAARGVQHEFKEGDWAVAEMRRHPLKGDRSFYADLTQYITFADDHFVPWWVTLARHNLEKEAPNGVATEMLDEGLERQDLTALNFVTIDSASTEDMDDALYAEELADGRLQLTVAIADPTAWIAEGSKLDNTAKIRAFTNYLPGFNIPMLPRELSDDLCSLRANEVRPALACRMIIAADGTIDDDIAFFAATIESKAKLAYDNVSDWLENNGTWQPDNEGIAQQIRLLHRICLSRSEWRHHHALVFKDRPDYRFVLGEKGEVLDIVAEPRRIANRIVEESMIAANLCAARVLRDKLGFGIYNVHTGFDPANADALAALLKTHGLHVDAEEVLTLEGFCKLRRELDAQPSGFLDSRIRRFQSFAEISTEPGPHFGLGLEAYATWTSPIRKYGDMINHRLLKAVIKGEAIARPQEDITQQMAERRRLNRMAERDVGDWLYARFLNDKAGTNTRFAAEIIDVSRGGMRVRLVDNGAIAFIPAPFLHAVRDALVCSQENGTVQIKGETVYKVTDVIDVTIAEVRMETRSIIARPAA.

Positions 189-516 (RQDLTALNFV…NHRLLKAVIK (328 aa)) constitute an RNB domain. The region spanning 561 to 643 (NTRFAAEIID…ETRSIIARPA (83 aa)) is the S1 motif domain.

The protein belongs to the RNR ribonuclease family. RNase II subfamily.

The protein localises to the cytoplasm. The enzyme catalyses Exonucleolytic cleavage in the 3'- to 5'-direction to yield nucleoside 5'-phosphates.. Its function is as follows. Involved in mRNA degradation. Hydrolyzes single-stranded polyribonucleotides processively in the 3' to 5' direction. The protein is Exoribonuclease 2 of Salmonella choleraesuis (strain SC-B67).